The chain runs to 457 residues: Siroheme synthase (457 aa).

The segment at Met-1–Thr-204 is precorrin-2 dehydrogenase /sirohydrochlorin ferrochelatase. NAD(+) is bound by residues Asp-22–Val-23 and Leu-43–Ala-44. A Phosphoserine modification is found at Ser-128. The uroporphyrinogen-III C-methyltransferase stretch occupies residues Gly-216–His-457. Pro-225 is a binding site for S-adenosyl-L-methionine. Asp-248 serves as the catalytic Proton acceptor. Lys-270 functions as the Proton donor in the catalytic mechanism. Residues Gly-301–Asp-303, Ile-306, Thr-331–Ala-332, Met-382, and Gly-411 each bind S-adenosyl-L-methionine.

The protein in the N-terminal section; belongs to the precorrin-2 dehydrogenase / sirohydrochlorin ferrochelatase family. This sequence in the C-terminal section; belongs to the precorrin methyltransferase family.

The enzyme catalyses uroporphyrinogen III + 2 S-adenosyl-L-methionine = precorrin-2 + 2 S-adenosyl-L-homocysteine + H(+). It carries out the reaction precorrin-2 + NAD(+) = sirohydrochlorin + NADH + 2 H(+). It catalyses the reaction siroheme + 2 H(+) = sirohydrochlorin + Fe(2+). Its pathway is cofactor biosynthesis; adenosylcobalamin biosynthesis; precorrin-2 from uroporphyrinogen III: step 1/1. It participates in cofactor biosynthesis; adenosylcobalamin biosynthesis; sirohydrochlorin from precorrin-2: step 1/1. It functions in the pathway porphyrin-containing compound metabolism; siroheme biosynthesis; precorrin-2 from uroporphyrinogen III: step 1/1. The protein operates within porphyrin-containing compound metabolism; siroheme biosynthesis; siroheme from sirohydrochlorin: step 1/1. Its pathway is porphyrin-containing compound metabolism; siroheme biosynthesis; sirohydrochlorin from precorrin-2: step 1/1. Its function is as follows. Multifunctional enzyme that catalyzes the SAM-dependent methylations of uroporphyrinogen III at position C-2 and C-7 to form precorrin-2 via precorrin-1. Then it catalyzes the NAD-dependent ring dehydrogenation of precorrin-2 to yield sirohydrochlorin. Finally, it catalyzes the ferrochelation of sirohydrochlorin to yield siroheme. The polypeptide is Siroheme synthase (Escherichia coli O45:K1 (strain S88 / ExPEC)).